The primary structure comprises 250 residues: 3-deoxy-manno-octulosonate cytidylyltransferase (250 aa).

Belongs to the KdsB family.

The protein resides in the cytoplasm. The enzyme catalyses 3-deoxy-alpha-D-manno-oct-2-ulosonate + CTP = CMP-3-deoxy-beta-D-manno-octulosonate + diphosphate. The protein operates within nucleotide-sugar biosynthesis; CMP-3-deoxy-D-manno-octulosonate biosynthesis; CMP-3-deoxy-D-manno-octulosonate from 3-deoxy-D-manno-octulosonate and CTP: step 1/1. It participates in bacterial outer membrane biogenesis; lipopolysaccharide biosynthesis. Activates KDO (a required 8-carbon sugar) for incorporation into bacterial lipopolysaccharide in Gram-negative bacteria. The polypeptide is 3-deoxy-manno-octulosonate cytidylyltransferase (Legionella pneumophila (strain Paris)).